Here is a 280-residue protein sequence, read N- to C-terminus: Pantothenate synthetase (280 aa).

Position 30 to 37 (30 to 37 (MGYLHEGH)) interacts with ATP. The active-site Proton donor is His37. A (R)-pantoate-binding site is contributed by Gln61. Gln61 serves as a coordination point for beta-alanine. An ATP-binding site is contributed by 147-150 (GQKD). Gln153 provides a ligand contact to (R)-pantoate. Residues Val176 and 184–187 (MSSR) each bind ATP.

It belongs to the pantothenate synthetase family. As to quaternary structure, homodimer.

Its subcellular location is the cytoplasm. The catalysed reaction is (R)-pantoate + beta-alanine + ATP = (R)-pantothenate + AMP + diphosphate + H(+). Its pathway is cofactor biosynthesis; (R)-pantothenate biosynthesis; (R)-pantothenate from (R)-pantoate and beta-alanine: step 1/1. Functionally, catalyzes the condensation of pantoate with beta-alanine in an ATP-dependent reaction via a pantoyl-adenylate intermediate. The sequence is that of Pantothenate synthetase from Fervidobacterium nodosum (strain ATCC 35602 / DSM 5306 / Rt17-B1).